A 611-amino-acid polypeptide reads, in one-letter code: Phosphoenolpyruvate carboxykinase [GTP] (611 aa).

Substrate-binding positions include arginine 82 and tyrosine 222–glycine 224. 2 residues coordinate Mn(2+): lysine 231 and histidine 251. A substrate-binding site is contributed by serine 273. GTP is bound at residue alanine 274–asparagine 279. Residue cysteine 275 is part of the active site. Aspartate 298 is a binding site for Mn(2+). Asparagine 389–arginine 391 is a binding site for substrate. GTP-binding positions include arginine 391, arginine 422, and phenylalanine 517–asparagine 520.

It belongs to the phosphoenolpyruvate carboxykinase [GTP] family. Monomer. Mn(2+) is required as a cofactor.

It localises to the cytoplasm. It catalyses the reaction oxaloacetate + GTP = phosphoenolpyruvate + GDP + CO2. It functions in the pathway carbohydrate biosynthesis; gluconeogenesis. Its function is as follows. Catalyzes the conversion of oxaloacetate (OAA) to phosphoenolpyruvate (PEP), the rate-limiting step in the metabolic pathway that produces glucose from lactate and other precursors derived from the citric acid cycle. The sequence is that of Phosphoenolpyruvate carboxykinase [GTP] from Arthrobacter sp. (strain FB24).